The chain runs to 768 residues: MSWMQNLKNYQHLRDPSEYMSQVYGDPLAYLQENTKFVTEREYYEDFGYGECFNSSESEVQCELITGEFDPKLLPYDKRLAWHFKEFCYKTSAHGIPMIGEAPNVYYRAVWVMLFLGCMIMLYLNAQSVLDKYNRNEKIVDIQLKFDTAPFPAITLCNLNPYKASLATSVDLVKRTLSAFDGAMGKAGGNKEHDGEKEVITEAPTTPAPTTKPSRRRGKRDLSGAFFEPGFARCLCGSQGSSEQEDKDDEKEEEMHETTTRKPFNINDADEEWDGMEEYDNNEHYENYDVEATTGMNMMEECQSERTKFDEPTGFDDRCICAFDRSTHDAWPCFLNGTWETTECDTCNEHAFCTKDNKTAKGHRSPCICAPSKFCVAYNGKTPPIEIWTYLQGGTPTEDPNFLEAMGFQGMTDEVAIVTKAKENMFAMATLSMQDRERLSTTKRELVHKCSFNGKACDIEADFLTHIDPVFGSCFTFNHNRTVNLTSIRAGPMYGLRMLVYVNASDYMPTTEATGVRLTIHDKEDFPFPDTFGYSAPTGYVSSFGLRLRKMSRLPAPYGDCVPDGKTSDYIYSNYEYSVEGCYRSCFQQLVLKECRCGDPRFPVPEGARHCDAADPVARRCLDARMNDLGGLHGSFRCRCQQPCRQSIYSVTYSPAKWPSLSLQIQLGSCNGTAVECNKHYKENGAMVEVFYEQLNFEMLTESEAYGFVNLLADFGGQLGLWCGISFLTCCEFVFLFLETAYMSAEHNYSLYKKKKAEKAKKVASGSF.

Residues Met1–Ala109 are Cytoplasmic-facing. Residues Val110–Leu130 form a helical membrane-spanning segment. At Asp131–Gln718 the chain is on the extracellular side. Disordered stretches follow at residues Ala187–Asp221 and Gly237–Thr260. Positions Gly189–Ile200 are enriched in basic and acidic residues. A compositionally biased stretch (low complexity) spans Ala203 to Lys212. Acidic residues predominate over residues Glu243–Glu252. Asn336, Asn357, Asn480, Asn484, Asn503, and Asn671 each carry an N-linked (GlcNAc...) asparagine glycan. A helical transmembrane segment spans residues Leu719–Glu739. Residues Thr740–Phe768 lie on the Cytoplasmic side of the membrane.

This sequence belongs to the amiloride-sensitive sodium channel (TC 1.A.6) family. As to quaternary structure, the channel is probably composed of at least the mec-2, mec-4, mec-6 and mec-10 subunits.

The protein localises to the membrane. Probable sodium channel subunit. May be needed for mechanosensory transduction (touch sensitivity). Negatively regulates the turning step of male mating behavior. This Caenorhabditis briggsae protein is Degenerin mec-4 (mec-4).